Here is a 145-residue protein sequence, read N- to C-terminus: Aminoglycoside N(6')-acetyltransferase type 1 (145 aa).

Residues 1–145 (MNIKPASEAS…KVVYFSKKID (145 aa)) enclose the N-acetyltransferase domain. 3 residues coordinate substrate: Trp-22, Tyr-65, and Glu-78. 80-82 (IYV) contributes to the acetyl-CoA binding site. Asp-114 is a substrate binding site. Asn-119 contacts acetyl-CoA. Position 135 (Glu-135) interacts with substrate.

Homodimer.

It catalyses the reaction kanamycin B + acetyl-CoA = N(6')-acetylkanamycin B + CoA + H(+). Its function is as follows. Catalyzes the transfer of an acetyl group from acetyl-CoA to the 6'-amino group of aminoglycoside molecules conferring resistance to antibiotics containing the purpurosamine ring including amikacin, kanamycin, tobramycin and netilmicin. This Acinetobacter haemolyticus protein is Aminoglycoside N(6')-acetyltransferase type 1.